The chain runs to 426 residues: Enolase (426 aa).

(2R)-2-phosphoglycerate is bound at residue Gln-162. Glu-204 serves as the catalytic Proton donor. Positions 241, 284, and 311 each coordinate Mg(2+). The (2R)-2-phosphoglycerate site is built by Lys-336, Arg-365, Ser-366, and Lys-387. Residue Lys-336 is the Proton acceptor of the active site.

This sequence belongs to the enolase family. Component of the RNA degradosome, a multiprotein complex involved in RNA processing and mRNA degradation. Mg(2+) serves as cofactor.

It is found in the cytoplasm. Its subcellular location is the secreted. It localises to the cell surface. It carries out the reaction (2R)-2-phosphoglycerate = phosphoenolpyruvate + H2O. It functions in the pathway carbohydrate degradation; glycolysis; pyruvate from D-glyceraldehyde 3-phosphate: step 4/5. Catalyzes the reversible conversion of 2-phosphoglycerate (2-PG) into phosphoenolpyruvate (PEP). It is essential for the degradation of carbohydrates via glycolysis. The sequence is that of Enolase from Hydrogenovibrio crunogenus (strain DSM 25203 / XCL-2) (Thiomicrospira crunogena).